The chain runs to 661 residues: Kyphoscoliosis peptidase (661 aa).

Positions 116-137 (GDKNGNMRPRQPGGKDAHAYPW) are disordered. Catalysis depends on residues Cys225, His267, and Asp282.

Belongs to the transglutaminase-like superfamily. Interacts with IGFN1 and FLNC. Specifically expressed in skeletal and cardiac muscle.

It localises to the cytoplasm. The protein resides in the cytoskeleton. Its subcellular location is the myofibril. The protein localises to the sarcomere. It is found in the z line. Functionally, probable cytoskeleton-associated protease required for normal muscle growth. Involved in function, maturation and stabilization of the neuromuscular junction. May act by cleaving muscle-specific proteins such as FLNC. The sequence is that of Kyphoscoliosis peptidase from Mus musculus (Mouse).